A 185-amino-acid polypeptide reads, in one-letter code: Elongation factor P (185 aa).

This sequence belongs to the elongation factor P family.

The protein resides in the cytoplasm. It functions in the pathway protein biosynthesis; polypeptide chain elongation. Functionally, involved in peptide bond synthesis. Stimulates efficient translation and peptide-bond synthesis on native or reconstituted 70S ribosomes in vitro. Probably functions indirectly by altering the affinity of the ribosome for aminoacyl-tRNA, thus increasing their reactivity as acceptors for peptidyl transferase. The sequence is that of Elongation factor P from Bordetella bronchiseptica (strain ATCC BAA-588 / NCTC 13252 / RB50) (Alcaligenes bronchisepticus).